The sequence spans 124 residues: Fluoride-specific ion channel FluC (124 aa).

The next 4 helical transmembrane spans lie at 4–24 (VLFV…ISLL), 35–55 (FGTL…FALG), 62–82 (PEIK…FSTF), and 95–115 (LVKA…VVYL). Positions 74 and 77 each coordinate Na(+).

Belongs to the fluoride channel Fluc/FEX (TC 1.A.43) family.

It localises to the cell inner membrane. The enzyme catalyses fluoride(in) = fluoride(out). Its activity is regulated as follows. Na(+) is not transported, but it plays an essential structural role and its presence is essential for fluoride channel function. Fluoride-specific ion channel. Important for reducing fluoride concentration in the cell, thus reducing its toxicity. This chain is Fluoride-specific ion channel FluC, found in Shewanella halifaxensis (strain HAW-EB4).